The primary structure comprises 554 residues: Serine/threonine-protein phosphatase 2B catalytic subunit (554 aa).

Residues Asp-119, His-121, and Asp-147 each contribute to the Fe cation site. Zn(2+) is bound by residues Asp-147 and Asn-179. His-180 (proton donor) is an active-site residue. His-228 and His-310 together coordinate Zn(2+). A disordered region spans residues 411–433; the sequence is LKESAPTQHKQPAPSENENKADQ. Residues 415-426 show a composition bias toward polar residues; sequence APTQHKQPAPSE.

Belongs to the PPP phosphatase family. PP-2B subfamily. Composed of two components (A and B), the A component is the catalytic subunit and the B component confers calcium sensitivity. Fe(3+) serves as cofactor. It depends on Zn(2+) as a cofactor.

It catalyses the reaction O-phospho-L-seryl-[protein] + H2O = L-seryl-[protein] + phosphate. The catalysed reaction is O-phospho-L-threonyl-[protein] + H2O = L-threonyl-[protein] + phosphate. Functionally, calcium-dependent, calmodulin-stimulated protein phosphatase. This subunit may have a role in the calmodulin activation of calcineurin. Appears to be involved in cytokinesis, mating, transport, nuclear and spindle pole body positioning, and cell shape. In Schizosaccharomyces pombe (strain 972 / ATCC 24843) (Fission yeast), this protein is Serine/threonine-protein phosphatase 2B catalytic subunit (ppb1).